Consider the following 150-residue polypeptide: Testis-expressed protein 22 (150 aa).

The span at 1-23 (MDSRKLSPRGKKLESHLSQEHRR) shows a compositional bias: basic and acidic residues. A disordered region spans residues 1–26 (MDSRKLSPRGKKLESHLSQEHRRPPL).

Its subcellular location is the cytoplasm. It localises to the cytoplasmic vesicle. It is found in the secretory vesicle. The protein resides in the acrosome. This chain is Testis-expressed protein 22 (TEX22), found in Homo sapiens (Human).